The sequence spans 321 residues: Lipoyl synthase (321 aa).

Residues cysteine 68, cysteine 73, cysteine 79, cysteine 94, cysteine 98, cysteine 101, and serine 308 each coordinate [4Fe-4S] cluster. In terms of domain architecture, Radical SAM core spans 80 to 297 (FNHGTATFMI…KEEALAMGFT (218 aa)).

The protein belongs to the radical SAM superfamily. Lipoyl synthase family. [4Fe-4S] cluster is required as a cofactor.

The protein localises to the cytoplasm. The catalysed reaction is [[Fe-S] cluster scaffold protein carrying a second [4Fe-4S](2+) cluster] + N(6)-octanoyl-L-lysyl-[protein] + 2 oxidized [2Fe-2S]-[ferredoxin] + 2 S-adenosyl-L-methionine + 4 H(+) = [[Fe-S] cluster scaffold protein] + N(6)-[(R)-dihydrolipoyl]-L-lysyl-[protein] + 4 Fe(3+) + 2 hydrogen sulfide + 2 5'-deoxyadenosine + 2 L-methionine + 2 reduced [2Fe-2S]-[ferredoxin]. The protein operates within protein modification; protein lipoylation via endogenous pathway; protein N(6)-(lipoyl)lysine from octanoyl-[acyl-carrier-protein]: step 2/2. In terms of biological role, catalyzes the radical-mediated insertion of two sulfur atoms into the C-6 and C-8 positions of the octanoyl moiety bound to the lipoyl domains of lipoate-dependent enzymes, thereby converting the octanoylated domains into lipoylated derivatives. The chain is Lipoyl synthase from Photorhabdus laumondii subsp. laumondii (strain DSM 15139 / CIP 105565 / TT01) (Photorhabdus luminescens subsp. laumondii).